The chain runs to 279 residues: Undecaprenyl-diphosphatase (279 aa).

A run of 8 helical transmembrane segments spans residues 2 to 22 (LFIE…TEWL), 44 to 64 (AFME…VIVI), 85 to 105 (WQLW…AVPL), 113 to 133 (FNHM…FLWI), 163 to 183 (VLSI…AIIL), 188 to 208 (TVAA…YSGL), 225 to 245 (LLVL…VIKL), and 255 to 275 (FTVF…YSVF).

The protein belongs to the UppP family.

It is found in the cell membrane. The catalysed reaction is di-trans,octa-cis-undecaprenyl diphosphate + H2O = di-trans,octa-cis-undecaprenyl phosphate + phosphate + H(+). Its function is as follows. Catalyzes the dephosphorylation of undecaprenyl diphosphate (UPP). Confers resistance to bacitracin. The sequence is that of Undecaprenyl-diphosphatase from Streptococcus equi subsp. equi (strain 4047).